We begin with the raw amino-acid sequence, 464 residues long: Argininosuccinate lyase (464 aa).

This sequence belongs to the lyase 1 family. Argininosuccinate lyase subfamily.

Its subcellular location is the cytoplasm. The catalysed reaction is 2-(N(omega)-L-arginino)succinate = fumarate + L-arginine. It participates in amino-acid biosynthesis; L-arginine biosynthesis; L-arginine from L-ornithine and carbamoyl phosphate: step 3/3. This is Argininosuccinate lyase from Desulfotalea psychrophila (strain LSv54 / DSM 12343).